The primary structure comprises 403 residues: Golgin-45 (403 aa).

The segment at 1–63 (MEKMTTLKSS…PRKKVSSDSP (63 aa)) is disordered. The Tankyrase-binding motif motif lies at 22–26 (RGAGD). Ser53 is modified (phosphoserine). Residues 123 to 216 (RKELSEVKKV…QLERMSIQCD (94 aa)) are a coiled coil. Ser356 is modified (phosphoserine). An essential for interaction with GORASP2 region spans residues 397–403 (QGELIAL).

In terms of assembly, interacts with GORASP2. Interacts with the GTP-bound form of RAB2, but not with other Golgi Rab proteins. Identified in a complex with RAB2 and GORASP2. Post-translationally, ADP-ribosylated by tankyrase TNKS and TNKS2. Poly-ADP-ribosylated protein is recognized by RNF146, followed by ubiquitination. In terms of processing, ubiquitinated by RNF146 when poly-ADP-ribosylated, leading to its degradation.

Its subcellular location is the golgi apparatus membrane. Functionally, required for normal Golgi structure and for protein transport from the endoplasmic reticulum (ER) through the Golgi apparatus to the cell surface. In Mus musculus (Mouse), this protein is Golgin-45 (Blzf1).